A 223-amino-acid chain; its full sequence is ATP-dependent dethiobiotin synthetase BioD (223 aa).

Mg(2+) is bound at residue Thr-16. Residue Lys-37 is part of the active site. Residue Ser-41 participates in substrate binding. Residues Asp-50 and Glu-111 each coordinate Mg(2+). ATP contacts are provided by residues Asp-50, 111–114 (EGAG), 171–172 (NQ), 201–203 (AHV), and Glu-208.

Belongs to the dethiobiotin synthetase family. Homodimer. It depends on Mg(2+) as a cofactor.

Its subcellular location is the cytoplasm. The enzyme catalyses (7R,8S)-7,8-diammoniononanoate + CO2 + ATP = (4R,5S)-dethiobiotin + ADP + phosphate + 3 H(+). The protein operates within cofactor biosynthesis; biotin biosynthesis; biotin from 7,8-diaminononanoate: step 1/2. Functionally, catalyzes a mechanistically unusual reaction, the ATP-dependent insertion of CO2 between the N7 and N8 nitrogen atoms of 7,8-diaminopelargonic acid (DAPA, also called 7,8-diammoniononanoate) to form a ureido ring. The sequence is that of ATP-dependent dethiobiotin synthetase BioD from Anaeromyxobacter sp. (strain Fw109-5).